The primary structure comprises 1187 residues: Nucleolar protein 6 (1187 aa).

Over residues 1–20 the composition is skewed to basic and acidic residues; the sequence is MGRIKENQSKKKTLLRDSKA. Disordered stretches follow at residues 1-64 and 1134-1187; these read MGRI…FKHP and REQR…SALC.

It belongs to the NRAP family. As to quaternary structure, part of the small subunit (SSU) processome, composed of more than 70 proteins and the RNA chaperone small nucleolar RNA (snoRNA) U3.

The protein localises to the nucleus. It is found in the nucleolus. Its subcellular location is the chromosome. Its function is as follows. Part of the small subunit (SSU) processome, first precursor of the small eukaryotic ribosomal subunit. During the assembly of the SSU processome in the nucleolus, many ribosome biogenesis factors, an RNA chaperone and ribosomal proteins associate with the nascent pre-rRNA and work in concert to generate RNA folding, modifications, rearrangements and cleavage as well as targeted degradation of pre-ribosomal RNA by the RNA exosome. The polypeptide is Nucleolar protein 6 (Drosophila mojavensis (Fruit fly)).